The sequence spans 108 residues: Large ribosomal subunit protein uL23 (108 aa).

It belongs to the universal ribosomal protein uL23 family. As to quaternary structure, part of the 50S ribosomal subunit. Contacts protein L29, and trigger factor when it is bound to the ribosome.

One of the early assembly proteins it binds 23S rRNA. One of the proteins that surrounds the polypeptide exit tunnel on the outside of the ribosome. Forms the main docking site for trigger factor binding to the ribosome. The polypeptide is Large ribosomal subunit protein uL23 (Polaromonas naphthalenivorans (strain CJ2)).